The sequence spans 340 residues: Phosphate acyltransferase (340 aa).

The protein belongs to the PlsX family. Homodimer. Probably interacts with PlsY.

It localises to the cytoplasm. It carries out the reaction a fatty acyl-[ACP] + phosphate = an acyl phosphate + holo-[ACP]. It functions in the pathway lipid metabolism; phospholipid metabolism. Its function is as follows. Catalyzes the reversible formation of acyl-phosphate (acyl-PO(4)) from acyl-[acyl-carrier-protein] (acyl-ACP). This enzyme utilizes acyl-ACP as fatty acyl donor, but not acyl-CoA. This is Phosphate acyltransferase from Helicobacter pylori (strain HPAG1).